We begin with the raw amino-acid sequence, 111 residues long: Putative G antigen family E member 3 (111 aa).

Residues 1 to 67 are disordered; it reads MSEHVRTRSQ…EGAPAVQGPD (67 aa). Over residues 8–24 the composition is skewed to polar residues; the sequence is RSQSSERGNDQESSQPV. At Thr97 the chain carries Phosphothreonine.

This sequence belongs to the GAGE family.

The polypeptide is Putative G antigen family E member 3 (PAGE2B) (Homo sapiens (Human)).